Here is a 119-residue protein sequence, read N- to C-terminus: Fluoride-specific ion channel FluC (119 aa).

A run of 4 helical transmembrane segments spans residues Ile-5–Ala-25, Thr-34–Ile-54, Trp-59–Leu-79, and Ile-97–Ala-117. Residues Gly-69 and Thr-72 each contribute to the Na(+) site.

Belongs to the fluoride channel Fluc/FEX (TC 1.A.43) family.

It is found in the cell inner membrane. It carries out the reaction fluoride(in) = fluoride(out). Its activity is regulated as follows. Na(+) is not transported, but it plays an essential structural role and its presence is essential for fluoride channel function. Functionally, fluoride-specific ion channel. Important for reducing fluoride concentration in the cell, thus reducing its toxicity. The polypeptide is Fluoride-specific ion channel FluC (Neisseria meningitidis serogroup C / serotype 2a (strain ATCC 700532 / DSM 15464 / FAM18)).